Consider the following 118-residue polypeptide: Co-chaperonin GroES (118 aa).

It belongs to the GroES chaperonin family. In terms of assembly, heptamer of 7 subunits arranged in a ring. Interacts with the chaperonin GroEL.

The protein resides in the cytoplasm. In terms of biological role, together with the chaperonin GroEL, plays an essential role in assisting protein folding. The GroEL-GroES system forms a nano-cage that allows encapsulation of the non-native substrate proteins and provides a physical environment optimized to promote and accelerate protein folding. GroES binds to the apical surface of the GroEL ring, thereby capping the opening of the GroEL channel. This chain is Co-chaperonin GroES, found in Helicobacter pylori (strain P12).